The chain runs to 740 residues: 1,4-alpha-glucan branching enzyme GlgB (740 aa).

D414 serves as the catalytic Nucleophile. The active-site Proton donor is the E467.

Belongs to the glycosyl hydrolase 13 family. GlgB subfamily. In terms of assembly, monomer.

The enzyme catalyses Transfers a segment of a (1-&gt;4)-alpha-D-glucan chain to a primary hydroxy group in a similar glucan chain.. Its pathway is glycan biosynthesis; glycogen biosynthesis. In terms of biological role, catalyzes the formation of the alpha-1,6-glucosidic linkages in glycogen by scission of a 1,4-alpha-linked oligosaccharide from growing alpha-1,4-glucan chains and the subsequent attachment of the oligosaccharide to the alpha-1,6 position. The sequence is that of 1,4-alpha-glucan branching enzyme GlgB from Rhodospirillum rubrum (strain ATCC 11170 / ATH 1.1.1 / DSM 467 / LMG 4362 / NCIMB 8255 / S1).